We begin with the raw amino-acid sequence, 1354 residues long: Rho-associated protein kinase 1 (1354 aa).

N-acetylserine is present on Ser2. Residues 76-338 enclose the Protein kinase domain; the sequence is YEVVKVIGRG…VEEIKRHLFF (263 aa). Residues 82-90 and Lys105 each bind ATP; that span reads IGRGAFGEV. Asp198 (proton acceptor) is an active-site residue. The 69-residue stretch at 341 to 409 folds into the AGC-kinase C-terminal domain; the sequence is DQWAWETLRD…YSNRRYLSPA (69 aa). Residues 368 to 727 are interaction with FHOD1; sequence FDDLEEDKGD…KKLKEEREAR (360 aa). Residues 422–692 adopt a coiled-coil conformation; it reads KSLQENLQKT…RLEQEVNEHK (271 aa). An REM-1 domain is found at 479–556; that stretch reads STVSQIEKEK…LEEANDLLRT (78 aa). The tract at residues 707–946 is SHROOM3 binding; that stretch reads EAKSVAMCEM…AVSRLEETNS (240 aa). The RhoBD domain occupies 949 to 1015; it reads TKDIELLRKE…LAEIMNRKDF (67 aa). The segment at 998–1010 is RHOA binding; the sequence is LKTQAVNKLAEIM. Residues 1011-1102 are a coiled coil; the sequence is NRKDFKIDKK…KLSDLSDSTS (92 aa). The segment at 1101 to 1120 is disordered; sequence TSVASFPSADETDPNLPESR. Phosphoserine is present on residues Ser1105 and Ser1108. The tract at residues 1115–1354 is auto-inhibitory; that stretch reads NLPESRIEGW…VVKNTSGKTS (240 aa). Residues 1118–1317 enclose the PH domain; it reads ESRIEGWLSV…WVTHLVKKIP (200 aa). Residues 1228 to 1283 form a Phorbol-ester/DAG-type zinc finger; that stretch reads GHEFIPTLYHFPANCEACAKPLWHVFKPPPALECRRCHVKCHRDHLDKKEDLISPC. A Phosphoserine modification is found at Ser1328. The disordered stretch occupies residues 1333-1354; it reads STRSTANQSFRKVVKNTSGKTS.

This sequence belongs to the protein kinase superfamily. AGC Ser/Thr protein kinase family. In terms of assembly, homodimer. Interacts with RHOA (activated by GTP), RHOB, RHOC, GEM, MYLC2B, RHOE, PPP1R12A, LIMK1, LIMK2, TSG101, CHORDC1, DAPK3, PFN1, PTEN and JIP3. Interacts with FHOD1 in a Src-dependent manner. Interacts with ITGB1BP1 (via N-terminus and PTB domain). Interacts with SHROOM3. Mg(2+) is required as a cofactor. Post-translationally, autophosphorylated on serine and threonine residues. Cleaved by caspase-3 during apoptosis. This leads to constitutive activation of the kinase and membrane blebbing. Detected in corneal epithelium.

Its subcellular location is the cytoplasm. It localises to the cytoskeleton. The protein resides in the microtubule organizing center. It is found in the centrosome. The protein localises to the centriole. Its subcellular location is the golgi apparatus membrane. It localises to the cell projection. The protein resides in the bleb. It is found in the cell membrane. The protein localises to the lamellipodium. Its subcellular location is the ruffle. The enzyme catalyses L-seryl-[protein] + ATP = O-phospho-L-seryl-[protein] + ADP + H(+). The catalysed reaction is L-threonyl-[protein] + ATP = O-phospho-L-threonyl-[protein] + ADP + H(+). Activated by RHOA binding. Inhibited by Y-27632. Functionally, protein kinase which is a key regulator of the actin cytoskeleton and cell polarity. Involved in regulation of smooth muscle contraction, actin cytoskeleton organization, stress fiber and focal adhesion formation, neurite retraction, cell adhesion and motility via phosphorylation of DAPK3, GFAP, LIMK1, LIMK2, MYL9/MLC2, TPPP, PFN1 and PPP1R12A. Phosphorylates FHOD1 and acts synergistically with it to promote SRC-dependent non-apoptotic plasma membrane blebbing. Phosphorylates JIP3 and regulates the recruitment of JNK to JIP3 upon UVB-induced stress. Acts as a suppressor of inflammatory cell migration by regulating PTEN phosphorylation and stability. Acts as a negative regulator of VEGF-induced angiogenic endothelial cell activation. Required for centrosome positioning and centrosome-dependent exit from mitosis. Plays a role in terminal erythroid differentiation. Inhibits podocyte motility via regulation of actin cytoskeletal dynamics and phosphorylation of CFL1. Promotes keratinocyte terminal differentiation. Involved in osteoblast compaction through the fibronectin fibrillogenesis cell-mediated matrix assembly process, essential for osteoblast mineralization. May regulate closure of the eyelids and ventral body wall by inducing the assembly of actomyosin bundles. The chain is Rho-associated protein kinase 1 (ROCK1) from Oryctolagus cuniculus (Rabbit).